A 447-amino-acid polypeptide reads, in one-letter code: MTSASSATIQPPRIPRVGFVSLGCPKATVDSERILTCLRAEGYLISPSYADADLVVVNTCGFIDSAVAESLETIGEALTENGKVIVTGCLGAKEDVIRQAHPSVLAVTGPQATEEVMQAIHRHLPKPHDPYLDLVPPQGIKLTPKHYAYLKISEGCNHRCTFCIIPSMRGDLVSRPVGNVLQEAQNLVDAGVRELLIISQDTSAYGVDIKYRTGFWQGRPIRSRITELARALGELGIWIRLHYVYPYPHVDELIPLMAEGKLLPYLDIPFQHGSKRILKLMKRPANSENVLARIRQWRDICPDIALRSTFIVGFPGETEQEFEELLAFLEEAQLDRVGAFAYSPVKGAAANALPDPVPSEIQQERLARLMQWQEEISKKRLAGKKGRILKVLVDTVDENGVIARSYADAPEIDGVVYIEPDFSIKPGDWVDVRITRTGIHDLWAKKI.

The 111-residue stretch at 15–125 (PRVGFVSLGC…VMQAIHRHLP (111 aa)) folds into the MTTase N-terminal domain. The [4Fe-4S] cluster site is built by cysteine 24, cysteine 60, cysteine 89, cysteine 156, cysteine 160, and cysteine 163. Residues 142–379 (LTPKHYAYLK…MQWQEEISKK (238 aa)) form the Radical SAM core domain. The TRAM domain maps to 379 to 447 (KRLAGKKGRI…GIHDLWAKKI (69 aa)).

It belongs to the methylthiotransferase family. RimO subfamily. Requires [4Fe-4S] cluster as cofactor.

Its subcellular location is the cytoplasm. It catalyses the reaction L-aspartate(89)-[ribosomal protein uS12]-hydrogen + (sulfur carrier)-SH + AH2 + 2 S-adenosyl-L-methionine = 3-methylsulfanyl-L-aspartate(89)-[ribosomal protein uS12]-hydrogen + (sulfur carrier)-H + 5'-deoxyadenosine + L-methionine + A + S-adenosyl-L-homocysteine + 2 H(+). Its function is as follows. Catalyzes the methylthiolation of an aspartic acid residue of ribosomal protein uS12. The polypeptide is Ribosomal protein uS12 methylthiotransferase RimO (Nitrosomonas europaea (strain ATCC 19718 / CIP 103999 / KCTC 2705 / NBRC 14298)).